The primary structure comprises 247 residues: Probable transcriptional regulatory protein Tola_2714 (247 aa).

Residues 1 to 21 (MAGHSKWANIKHRKAAQDAKR) are disordered.

Belongs to the TACO1 family.

It is found in the cytoplasm. The sequence is that of Probable transcriptional regulatory protein Tola_2714 from Tolumonas auensis (strain DSM 9187 / NBRC 110442 / TA 4).